A 94-amino-acid polypeptide reads, in one-letter code: Large ribosomal subunit protein eL42 (94 aa).

The Zn(2+) site is built by Cys11, Cys14, Cys71, and Cys74. A C4-type zinc finger spans residues Cys11–Cys74.

This sequence belongs to the eukaryotic ribosomal protein eL42 family. In terms of assembly, part of the 50S ribosomal subunit. The cofactor is Zn(2+).

Functionally, binds to the 23S rRNA. This chain is Large ribosomal subunit protein eL42, found in Pyrococcus abyssi (strain GE5 / Orsay).